Consider the following 261-residue polypeptide: V-type proton ATPase subunit D (261 aa).

Phosphoserine is present on Ser241.

The protein belongs to the V-ATPase D subunit family. As to quaternary structure, V-ATPase is a heteromultimeric enzyme composed of a peripheral catalytic V1 complex (components A to H) attached to an integral membrane V0 proton pore complex (components: a, c, c'', d and e).

It localises to the vacuole membrane. Subunit of the peripheral V1 complex of vacuolar ATPase. V-ATPase is responsible for acidifying a variety of intracellular compartments in eukaryotic cells, thus providing most of the energy required for transport processes in the vacuolar system. The polypeptide is V-type proton ATPase subunit D (VHA-D) (Arabidopsis thaliana (Mouse-ear cress)).